A 662-amino-acid chain; its full sequence is F-box/WD repeat-containing protein pof10 (662 aa).

A compositionally biased stretch (polar residues) spans Met-1–Arg-16. The segment at Met-1–Thr-27 is disordered. One can recognise an F-box domain in the interval Asn-28–Ala-74. WD repeat units follow at residues Ser-215–Ser-260, Phe-263–Arg-302, and Thr-429–Lys-468. Residues Ser-581–Arg-600 form the UIM 1 domain. The interval Glu-617–Leu-645 is disordered. Residues Gln-621–Ala-640 show a composition bias toward polar residues. The UIM 2 domain occupies Asn-646–Met-662.

In terms of assembly, part of a SCF (SKP1-cullin-F-box) protein ligase complex. Interacts with skp1.

Its subcellular location is the cytoplasm. In terms of biological role, probably recognizes and binds to some phosphorylated proteins and promotes their ubiquitination and degradation. The polypeptide is F-box/WD repeat-containing protein pof10 (pof10) (Schizosaccharomyces pombe (strain 972 / ATCC 24843) (Fission yeast)).